The primary structure comprises 382 residues: MVKFADESKIRVSSGKGGNGCIAFRREKYVPMGGPSGGDGGRGGDLIFEIRRNMRTLVHLRHKRVYKAKNGGGGEGSQRFGKKGDDCIIPLPPGCVIKDPETGKTILDFGDAEEGRFVFLKGGNGGWGNCHFKTSTNQAPKTALPGQEGETREIIVELNIIADIGLVGFPNAGKSSLLDYFTNARPKIAPYPFTTKIPNLGVLRVDEERDVIIADIPGILEGASEGIGLGIRFLKHIARSAGLAFLIDLSDDNYLRAYDILCKELESYSKELAQKKRIIIATKLDLPDTKERFTELKNAIPDQEILGISLYNEWGLEEVKKAFIRLADEMQKTKPQKESLDPYGQNKNFMTAELDDVSYEEKNDDEHFGATVSLSRKRKPKK.

The region spanning 2–161 (VKFADESKIR…REIIVELNII (160 aa)) is the Obg domain. One can recognise an OBG-type G domain in the interval 162-328 (ADIGLVGFPN…VKKAFIRLAD (167 aa)). Residues 168 to 175 (GFPNAGKS), 193 to 197 (FTTKI), 215 to 218 (DIPG), 282 to 285 (TKLD), and 309 to 311 (SLY) contribute to the GTP site. Mg(2+) contacts are provided by Ser-175 and Thr-195. The segment at 360-382 (EEKNDDEHFGATVSLSRKRKPKK) is disordered.

It belongs to the TRAFAC class OBG-HflX-like GTPase superfamily. OBG GTPase family. As to quaternary structure, monomer. The cofactor is Mg(2+).

The protein localises to the cytoplasm. In terms of biological role, an essential GTPase which binds GTP, GDP and possibly (p)ppGpp with moderate affinity, with high nucleotide exchange rates and a fairly low GTP hydrolysis rate. Plays a role in control of the cell cycle, stress response, ribosome biogenesis and in those bacteria that undergo differentiation, in morphogenesis control. In Treponema denticola (strain ATCC 35405 / DSM 14222 / CIP 103919 / JCM 8153 / KCTC 15104), this protein is GTPase Obg.